The primary structure comprises 247 residues: 5-oxoprolinase subunit A 1 (247 aa).

Belongs to the LamB/PxpA family. In terms of assembly, forms a complex composed of PxpA, PxpB and PxpC.

The catalysed reaction is 5-oxo-L-proline + ATP + 2 H2O = L-glutamate + ADP + phosphate + H(+). Functionally, catalyzes the cleavage of 5-oxoproline to form L-glutamate coupled to the hydrolysis of ATP to ADP and inorganic phosphate. This chain is 5-oxoprolinase subunit A 1, found in Ralstonia nicotianae (strain ATCC BAA-1114 / GMI1000) (Ralstonia solanacearum).